The sequence spans 119 residues: Large ribosomal subunit protein uL18 (119 aa).

The protein belongs to the universal ribosomal protein uL18 family. As to quaternary structure, part of the 50S ribosomal subunit; part of the 5S rRNA/L5/L18/L25 subcomplex. Contacts the 5S and 23S rRNAs.

Its function is as follows. This is one of the proteins that bind and probably mediate the attachment of the 5S RNA into the large ribosomal subunit, where it forms part of the central protuberance. This Micrococcus luteus (Micrococcus lysodeikticus) protein is Large ribosomal subunit protein uL18.